The sequence spans 455 residues: Alpha-1,3/1,6-mannosyltransferase ALG2 (455 aa).

Residues 73-95 (FGRFYILCAILRQFVLVASLILW) form a helical membrane-spanning segment. An N-linked (GlcNAc...) asparagine glycan is attached at N138. The helical transmembrane segment at 434–453 (GAVYLLGAIGVLFACIIYCI) threads the bilayer.

It belongs to the glycosyltransferase group 1 family. Glycosyltransferase 4 subfamily.

It is found in the endoplasmic reticulum membrane. The catalysed reaction is a beta-D-Man-(1-&gt;4)-beta-D-GlcNAc-(1-&gt;4)-alpha-D-GlcNAc-diphospho-di-trans,poly-cis-dolichol + GDP-alpha-D-mannose = an alpha-D-Man-(1-&gt;3)-beta-D-Man-(1-&gt;4)-beta-D-GlcNAc-(1-&gt;4)-alpha-D-GlcNAc-diphospho-di-trans,poly-cis-dolichol + GDP + H(+). It carries out the reaction an alpha-D-Man-(1-&gt;3)-beta-D-Man-(1-&gt;4)-beta-D-GlcNAc-(1-&gt;4)-alpha-D-GlcNAc-diphospho-di-trans,poly-cis-dolichol + GDP-alpha-D-mannose = an alpha-D-Man-(1-&gt;3)-[alpha-D-Man-(1-&gt;6)]-beta-D-Man-(1-&gt;4)-beta-D-GlcNAc-(1-&gt;4)-alpha-D-GlcNAc-diphospho-di-trans,poly-cis-dolichol + GDP + H(+). Its pathway is protein modification; protein glycosylation. In terms of biological role, mannosylates Man(2)GlcNAc(2)-dolichol diphosphate and Man(1)GlcNAc(2)-dolichol diphosphate to form Man(3)GlcNAc(2)-dolichol diphosphate. This Rhizomucor pusillus protein is Alpha-1,3/1,6-mannosyltransferase ALG2 (ALG2).